A 993-amino-acid polypeptide reads, in one-letter code: Desmoglein-3 (993 aa).

An N-terminal signal peptide occupies residues 1–23 (MTWLLFRTSGALAILMVLILVHG). Positions 24–48 (ELRIETKGQHGEDETAIQGRRRYKR) are excised as a propeptide. 4 consecutive Cadherin domains span residues 48–156 (REWV…APVF), 157–266 (SQSI…FPMF), 267–386 (KESQ…HPAS), and 383–494 (HPAS…CPTV). Over 49 to 617 (EWVKFAKPCR…GKRPSGRLGS (569 aa)) the chain is Extracellular. 2 N-linked (GlcNAc...) asparagine glycosylation sites follow: Asn109 and Asn179. 2 N-linked (GlcNAc...) asparagine glycosylation sites follow: Asn458 and Asn544. The helical transmembrane segment at 618 to 638 (AAIGLLLLGLLLLLLAPLLLL) threads the bilayer. The Cytoplasmic segment spans residues 639 to 993 (TCDYGVGPIG…CTEDPCSRLI (355 aa)). Positions 641–713 (DYGVGPIGGV…NTYAGGTVVE (73 aa)) are required for interaction with CTNND1 and localization at cell-cell junctions. 2 Desmoglein repeat repeats span residues 903-929 (LSAS…MVTE) and 930-960 (TYSA…ERVI).

In terms of assembly, homodimer. Part of a complex that contains DSG3, PKP1, YAP1 and YWHAG; the complex is required for localization of DSG3 and YAP1 to the cell membrane in keratinocytes. Interacts with PKP2. Interacts with CTNND1; the interaction facilitates DSG3 localization and retention at cell-cell junctions. Interacts with CDH1; the interaction is required for CDH1 localization to developing adherens junctions. Interacts with RAC1; the interaction is required for DSG3 translocation to cell-cell junctions, organization of cortical F-actin bundles and actin anchoring at cell-cell junctions. Interacts with DSC3; the interaction may limit the interaction of DSC3 with p38MAPK family members and therefore repress p38MAPK signaling activation.

The protein resides in the cell membrane. It localises to the cell junction. Its subcellular location is the desmosome. It is found in the cytoplasm. The protein localises to the tight junction. In terms of biological role, a component of desmosome cell-cell junctions which are required for positive regulation of cellular adhesion. Required for adherens and desmosome junction assembly in response to mechanical force in keratinocytes. Required for desmosome-mediated cell-cell adhesion of cells surrounding the telogen hair club and the basal layer of the outer root sheath epithelium, consequently is essential for the anchoring of telogen hairs in the hair follicle. Required for the maintenance of the epithelial barrier via promoting desmosome-mediated intercellular attachment of suprabasal epithelium to basal cells. May play a role in the protein stability of the desmosome plaque components DSP, JUP, PKP1, PKP2 and PKP3. Required for YAP1 localization at the plasma membrane in keratinocytes in response to mechanical strain, via the formation of an interaction complex composed of DSG3, PKP1 and YWHAG. May also be involved in the positive regulation of YAP1 target gene transcription and as a result cell proliferation. Positively regulates cellular contractility and cell junction formation via organization of cortical F-actin bundles and anchoring of actin to tight junctions, in conjunction with RAC1. The cytoplasmic pool of DSG3 is required for the localization of CDH1 and CTNNB1 at developing adherens junctions, potentially via modulation of SRC activity. Inhibits keratinocyte migration via suppression of p38MAPK signaling, may therefore play a role in moderating wound healing. In Canis lupus familiaris (Dog), this protein is Desmoglein-3 (DSG3).